We begin with the raw amino-acid sequence, 145 residues long: 3-hydroxyacyl-[acyl-carrier-protein] dehydratase FabZ (145 aa).

Residue His-51 is part of the active site.

It belongs to the thioester dehydratase family. FabZ subfamily.

The protein resides in the cytoplasm. It catalyses the reaction a (3R)-hydroxyacyl-[ACP] = a (2E)-enoyl-[ACP] + H2O. Involved in unsaturated fatty acids biosynthesis. Catalyzes the dehydration of short chain beta-hydroxyacyl-ACPs and long chain saturated and unsaturated beta-hydroxyacyl-ACPs. This is 3-hydroxyacyl-[acyl-carrier-protein] dehydratase FabZ from Staphylococcus haemolyticus (strain JCSC1435).